A 148-amino-acid chain; its full sequence is UPF0178 protein lpp0103 (148 aa).

Belongs to the UPF0178 family.

This is UPF0178 protein lpp0103 from Legionella pneumophila (strain Paris).